The primary structure comprises 185 residues: Large ribosomal subunit protein bL12c (185 aa).

The N-terminal 47 residues, 1–47, are a transit peptide targeting the chloroplast; it reads MASTALSSAFSLLSLPSSSSPAAAAAAAPRSFAVPSRARPRRAVAVV.

Belongs to the bacterial ribosomal protein bL12 family.

The protein resides in the plastid. Its subcellular location is the chloroplast. The polypeptide is Large ribosomal subunit protein bL12c (RPL12-2) (Oryza sativa subsp. japonica (Rice)).